The chain runs to 503 residues: Transcription termination/antitermination protein NusA (503 aa).

An S1 motif domain is found at 140–206 (GELVIGVVKR…RGPQLLVSRT (67 aa)). The KH domain occupies 308–374 (SHTMDIAVNK…FMEKLDVDEE (67 aa)).

This sequence belongs to the NusA family. As to quaternary structure, monomer. Binds directly to the core enzyme of the DNA-dependent RNA polymerase and to nascent RNA.

It is found in the cytoplasm. Its function is as follows. Participates in both transcription termination and antitermination. In Coxiella burnetii (strain RSA 493 / Nine Mile phase I), this protein is Transcription termination/antitermination protein NusA.